The following is a 283-amino-acid chain: Putative replication protein XF_b0001 (283 aa).

This chain is Putative replication protein XF_b0001, found in Xylella fastidiosa (strain 9a5c).